The primary structure comprises 305 residues: Alpha-N-acetylgalactosaminide alpha-2,6-sialyltransferase 3 (305 aa).

The Cytoplasmic segment spans residues 1–8 (MACILKRK). The chain crosses the membrane as a helical; Signal-anchor for type II membrane protein span at residues 9–29 (PALAVSFIALCILLLAMRLAN). The Lumenal segment spans residues 30–305 (DVTFPLLLNC…VFTHPNWTVS (276 aa)). A disulfide bridge connects residues Cys-80 and Cys-229. N-linked (GlcNAc...) asparagine glycans are attached at residues Asn-239 and Asn-301.

It belongs to the glycosyltransferase 29 family. In terms of tissue distribution, in adults it is highly expressed in spleen, followed by kidney and lesser in lung. Not found in liver and skeletal muscle. In newborns it is abundantly expressed in brain and kidney.

The protein localises to the golgi apparatus membrane. The enzyme catalyses an alpha-Neu5Ac-(2-&gt;3)-beta-D-Gal-(1-&gt;3)-D-GlcNAc derivative + CMP-N-acetyl-beta-neuraminate = an alpha-Neu5Ac-(2-&gt;3)-beta-D-Gal-(1-&gt;3)-[alpha-Neu5Ac-(2-&gt;6)]-D-GlcNAc derivative + CMP + H(+). It carries out the reaction a ganglioside GM1b + CMP-N-acetyl-beta-neuraminate = a ganglioside GD1alpha + CMP + H(+). The catalysed reaction is a ganglioside GM1b (d18:1(4E)) + CMP-N-acetyl-beta-neuraminate = a ganglioside GD1alpha (d18:1(4E)) + CMP + H(+). It catalyses the reaction a globoside MSGG + CMP-N-acetyl-beta-neuraminate = a globoside DSGG + CMP + H(+). The enzyme catalyses 3-O-[alpha-Neu5Ac-(2-&gt;3)-beta-D-Gal-(1-&gt;3)-alpha-D-GalNAc]-L-Ser-[protein] + CMP-N-acetyl-beta-neuraminate = a 3-O-{alpha-Neu5Ac-(2-&gt;3)-beta-D-Gal-(1-&gt;3)-[alpha-Neu5Ac-(2-&gt;6)]-alpha-D-GalNAc}-L-seryl-[protein] + CMP + H(+). It carries out the reaction 3-O-[alpha-Neu5Ac-(2-&gt;3)-beta-D-Gal-(1-&gt;3)-alpha-D-GalNAc]-L-Thr-[protein] + CMP-N-acetyl-beta-neuraminate = a 3-O-{alpha-Neu5Ac-(2-&gt;3)-beta-D-Gal-(1-&gt;3)-[alpha-Neu5Ac-(2-&gt;6)]-alpha-D-GalNAc}-L-threonyl-[protein] + CMP + H(+). It functions in the pathway protein modification; protein glycosylation. It participates in glycolipid biosynthesis. Its function is as follows. Transfers the sialyl group (N-acetyl-alpha-neuraminyl or NeuAc) from CMP-NeuAc to the GalNAc residue on the NeuAc-alpha-2,3-Gal-beta-1,3-GalNAc sequence of glycoproteins and glycolipids forming an alpha-2,6-linkage. Produces branched type disialyl structures by transfer of a sialyl group onto a GalNAc residue inside the backbone core chains. ST6GalNAcIII prefers glycolipids to glycoproteins, predominantly catalyzing the biosynthesis of ganglioside GD1alpha from GM1b. GD1alpha is a critical molecule in the communication and interaction between neuronal cells and their supportive cells, particularly in brain tissues, and functions as an adhesion molecule in the process of metastasis. Sialylation of glycoproteins or glycosphingolipids is very important in tumor development, neuronal development, nerve repair, immunological processes and regulation of hormone sensitivity. This Rattus norvegicus (Rat) protein is Alpha-N-acetylgalactosaminide alpha-2,6-sialyltransferase 3 (St6galnac3).